The sequence spans 623 residues: Aspartate--tRNA(Asp/Asn) ligase (623 aa).

Residue E175 participates in L-aspartate binding. The tract at residues 199-202 (QQFK) is aspartate. L-aspartate-binding residues include R221 and H455. Position 221-223 (221-223 (RDE)) interacts with ATP. E517 contributes to the ATP binding site. Position 524 (R524) interacts with L-aspartate. Residue 569-572 (GVDR) participates in ATP binding.

Belongs to the class-II aminoacyl-tRNA synthetase family. Type 1 subfamily. In terms of assembly, homodimer.

Its subcellular location is the cytoplasm. It catalyses the reaction tRNA(Asx) + L-aspartate + ATP = L-aspartyl-tRNA(Asx) + AMP + diphosphate. Its function is as follows. Aspartyl-tRNA synthetase with relaxed tRNA specificity since it is able to aspartylate not only its cognate tRNA(Asp) but also tRNA(Asn). Reaction proceeds in two steps: L-aspartate is first activated by ATP to form Asp-AMP and then transferred to the acceptor end of tRNA(Asp/Asn). The sequence is that of Aspartate--tRNA(Asp/Asn) ligase from Methylocella silvestris (strain DSM 15510 / CIP 108128 / LMG 27833 / NCIMB 13906 / BL2).